A 131-amino-acid polypeptide reads, in one-letter code: Large ribosomal subunit protein bL21 (131 aa).

The segment at 111 to 131 is disordered; sequence VAAATGTADARRAAHNASAKE.

Belongs to the bacterial ribosomal protein bL21 family. As to quaternary structure, part of the 50S ribosomal subunit. Contacts protein L20.

Functionally, this protein binds to 23S rRNA in the presence of protein L20. The chain is Large ribosomal subunit protein bL21 from Cereibacter sphaeroides (strain ATCC 17029 / ATH 2.4.9) (Rhodobacter sphaeroides).